Reading from the N-terminus, the 335-residue chain is 3-dehydroquinate synthase (335 aa).

NAD(+)-binding positions include 56–61 (DGEKYK), 90–94 (GVITD), 114–115 (TT), Lys-127, Lys-135, and 153–156 (FLKT). Zn(2+) contacts are provided by Glu-168, His-227, and His-243.

The protein belongs to the sugar phosphate cyclases superfamily. Dehydroquinate synthase family. It depends on NAD(+) as a cofactor. The cofactor is Co(2+). Zn(2+) serves as cofactor.

The protein resides in the cytoplasm. The enzyme catalyses 7-phospho-2-dehydro-3-deoxy-D-arabino-heptonate = 3-dehydroquinate + phosphate. It functions in the pathway metabolic intermediate biosynthesis; chorismate biosynthesis; chorismate from D-erythrose 4-phosphate and phosphoenolpyruvate: step 2/7. In terms of biological role, catalyzes the conversion of 3-deoxy-D-arabino-heptulosonate 7-phosphate (DAHP) to dehydroquinate (DHQ). In Pyrococcus furiosus (strain ATCC 43587 / DSM 3638 / JCM 8422 / Vc1), this protein is 3-dehydroquinate synthase.